The primary structure comprises 899 residues: Receptor-like protein kinase At3g21340 (899 aa).

The signal sequence occupies residues 1-27 (MEYHPQAIRLCALIFISFYALLHLVEA). Over 28–522 (QDQKGFISLD…GAKKMNVVIP (495 aa)) the chain is Extracellular. N-linked (GlcNAc...) asparagine glycans are attached at residues Asn100, Asn146, Asn185, Asn240, Asn266, Asn420, Asn436, Asn449, Asn468, and Asn475. 3 LRR repeats span residues 415–438 (IVTS…QNLT), 439–461 (HLQE…LADI), and 463–485 (SLLV…LLQK). The helical transmembrane segment at 523-543 (IVASVAFVVVLGSALAFFFIF) threads the bilayer. The Cytoplasmic segment spans residues 544 to 899 (KKKKTSNSQD…FDIGATPDAR (356 aa)). Residue Thr583 is modified to Phosphothreonine. A Protein kinase domain is found at 592–865 (NNFERVLGKG…QVVIELNECL (274 aa)). Residues 598-606 (LGKGGFGMV) and Lys620 contribute to the ATP site. A Phosphotyrosine modification is found at Tyr665. Residue Asp717 is the Proton acceptor of the active site. Ser751 is modified (phosphoserine). Phosphothreonine is present on residues Thr752 and Thr757. Tyr765 is modified (phosphotyrosine).

Belongs to the protein kinase superfamily. Ser/Thr protein kinase family. In terms of processing, autophosphorylated on Tyr and Thr residues.

It localises to the cell membrane. The catalysed reaction is L-seryl-[protein] + ATP = O-phospho-L-seryl-[protein] + ADP + H(+). It catalyses the reaction L-threonyl-[protein] + ATP = O-phospho-L-threonyl-[protein] + ADP + H(+). The enzyme catalyses L-tyrosyl-[protein] + ATP = O-phospho-L-tyrosyl-[protein] + ADP + H(+). Functionally, probable receptor with a dual specificity kinase activity acting on both serine/threonine- and tyrosine-containing substrates. The chain is Receptor-like protein kinase At3g21340 from Arabidopsis thaliana (Mouse-ear cress).